A 201-amino-acid chain; its full sequence is Cutinase (201 aa).

Positions 1–20 (MKTSAQQLLSLLLLPLSAIA) are cleaved as a signal peptide. A disulfide bridge connects residues cysteine 31 and cysteine 105. Serine 116 acts as the Nucleophile in catalysis. A disulfide bridge connects residues cysteine 164 and cysteine 171. Aspartate 168 is an active-site residue. Residue histidine 181 is the Proton donor/acceptor of the active site.

This sequence belongs to the cutinase family. In terms of processing, the 2 disulfide bonds play a critical role in holding the catalytic residues in juxta-position; reduction of the disulfide bridges results in the complete inactivation of the enzyme.

It is found in the secreted. It carries out the reaction cutin + H2O = cutin monomers.. Catalyzes the hydrolysis of complex carboxylic polyesters found in the cell wall of plants. Degrades cutin, a macromolecule that forms the structure of the plant cuticle. Allows pathogenic fungi to penetrate through the cuticular barrier into the host plant during the initial stage of fungal infection. This chain is Cutinase (CUT1), found in Monilinia fructicola (Brown rot fungus).